We begin with the raw amino-acid sequence, 501 residues long: Dipeptide and tripeptide permease A (501 aa).

At 1-21 (MSTANNKPAESVSLNAFKQPR) the chain is on the cytoplasmic side. The helical transmembrane segment at 22–44 (AFYLIFSIELWERFGYYGLQGIM) threads the bilayer. Residues 45–59 (AVYLVKQLGMSEADS) lie on the Periplasmic side of the membrane. A helical transmembrane segment spans residues 60–80 (ITLFSSFSALVYGLVAIGGWL). The Cytoplasmic portion of the chain corresponds to 81 to 89 (GDKVLGTKR). A helical membrane pass occupies residues 90–110 (VIMLGAIVLAIGYALVAWSGH). Asp-111 is a topological domain (periplasmic). Residues 112–132 (AAIVYMGMATIAVGNGLFKAN) traverse the membrane as a helical segment. Residues 133–153 (PSSLLSTCYDKNDPRLDGAFT) are Cytoplasmic-facing. A helical membrane pass occupies residues 154–174 (MYYMSINIGSFFSMLATPWLA). Topologically, residues 175-178 (ARFG) are periplasmic. Residues 179-199 (WSVAFALSVVGMVITIINFAF) traverse the membrane as a helical segment. Over 200-218 (CQKWVKQYGSKPDFAPVHM) the chain is Cytoplasmic. Residues 219–239 (GKLLATIAGVVVLVAIATWLL) form a helical membrane-spanning segment. The Periplasmic segment spans residues 240 to 246 (HNQGIAR). The chain crosses the membrane as a helical span at residues 247 to 267 (MVLGVVALGIVVIFAKETIGL). Topologically, residues 268 to 274 (KGAARRK) are cytoplasmic. Residues 275–295 (MIVAFLLMVEAIVFFVLYSQM) traverse the membrane as a helical segment. Topologically, residues 296-320 (PTSLNFFAIRNVEHSILGIAFEPEQ) are periplasmic. A helical transmembrane segment spans residues 321–341 (YQALNPFWIMIGSPILAAIYN). Residues 342–352 (KMGDRLPMPHK) are Cytoplasmic-facing. The helical transmembrane segment at 353–373 (FAIGMVLCSGAFLVLPLGAKF) threads the bilayer. Over 374-383 (ASDAGIVSVN) the chain is Periplasmic. The helical transmembrane segment at 384 to 404 (WLILSYALQSIGELMISGLGL) threads the bilayer. Topologically, residues 405-414 (AMVAQLVPQR) are cytoplasmic. The chain crosses the membrane as a helical span at residues 415-435 (LMGFIMGSWFLTTAGAAIIAG). Residues 436 to 459 (KIANLMAVPENVTDPLVSLEVYGH) lie on the Periplasmic side of the membrane. A helical membrane pass occupies residues 460 to 480 (VFLQIGIVTAVIAALMLLTAP). Residues 481 to 501 (KLNRMTQDDSADLKARETAAA) are Cytoplasmic-facing.

Belongs to the major facilitator superfamily. Proton-dependent oligopeptide transporter (POT/PTR) (TC 2.A.17) family. DtpA subfamily.

The protein localises to the cell inner membrane. In terms of biological role, proton-dependent permease that transports di- and tripeptides. This Klebsiella pneumoniae (strain 342) protein is Dipeptide and tripeptide permease A.